Reading from the N-terminus, the 125-residue chain is Small ribosomal subunit protein uS12 (125 aa).

D89 is subject to 3-methylthioaspartic acid.

Belongs to the universal ribosomal protein uS12 family. Part of the 30S ribosomal subunit. Contacts proteins S8 and S17. May interact with IF1 in the 30S initiation complex.

Its function is as follows. With S4 and S5 plays an important role in translational accuracy. Functionally, interacts with and stabilizes bases of the 16S rRNA that are involved in tRNA selection in the A site and with the mRNA backbone. Located at the interface of the 30S and 50S subunits, it traverses the body of the 30S subunit contacting proteins on the other side and probably holding the rRNA structure together. The combined cluster of proteins S8, S12 and S17 appears to hold together the shoulder and platform of the 30S subunit. The polypeptide is Small ribosomal subunit protein uS12 (Clostridium botulinum (strain ATCC 19397 / Type A)).